The primary structure comprises 296 residues: Probable endonuclease 4 (296 aa).

The Zn(2+) site is built by His68, His109, Glu144, Asp178, His181, His213, Asp226, His228, and Glu258.

The protein belongs to the AP endonuclease 2 family. Requires Zn(2+) as cofactor.

It carries out the reaction Endonucleolytic cleavage to 5'-phosphooligonucleotide end-products.. Endonuclease IV plays a role in DNA repair. It cleaves phosphodiester bonds at apurinic or apyrimidinic (AP) sites, generating a 3'-hydroxyl group and a 5'-terminal sugar phosphate. In Staphylococcus carnosus (strain TM300), this protein is Probable endonuclease 4.